The following is a 203-amino-acid chain: Akirin-2 (203 aa).

Residues Ser-18 and Ser-21 each carry the phosphoserine modification. The short motif at 22-27 (PKRRRC) is the Nuclear localization signal element. Ser-57 is subject to Phosphoserine. The SYVS motif motif lies at 200–203 (SYVS).

The protein belongs to the akirin family. Homodimer. Interacts with IPO9; the interaction is direct. Associates (via SYVS motif) with 20S and 26S proteasomes. Interacts with SMARCD1; promoting SWI/SNF complex recruitment. Interacts with NFKBIZ. Interacts with YWHAB. In terms of processing, polyubiquitinated. Polyubiquitination is dependent of UBR5 that extends pre-ubiquitinated AKIRIN2. Widely expressed with the highest expression in peripheral blood leukocytes.

The protein localises to the nucleus. It localises to the cytoplasm. Its subcellular location is the membrane. Its function is as follows. Molecular adapter that acts as a bridge between a variety of multiprotein complexes, and which is involved in embryonic development, immunity, myogenesis and brain development. Plays a key role in nuclear protein degradation by promoting import of proteasomes into the nucleus: directly binds to fully assembled 20S proteasomes at one end and to nuclear import receptor IPO9 at the other end, bridging them together and mediating the import of pre-assembled proteasome complexes through the nuclear pore. Involved in innate immunity by regulating the production of interleukin-6 (IL6) downstream of Toll-like receptor (TLR): acts by bridging the NF-kappa-B inhibitor NFKBIZ and the SWI/SNF complex, leading to promote induction of IL6. Also involved in adaptive immunity by promoting B-cell activation. Involved in brain development: required for the survival and proliferation of cerebral cortical progenitor cells. Involved in myogenesis: required for skeletal muscle formation and skeletal development, possibly by regulating expression of muscle differentiation factors. Also plays a role in facilitating interdigital tissue regression during limb development. This chain is Akirin-2, found in Homo sapiens (Human).